The chain runs to 341 residues: Zinc transporter 6, chloroplastic (341 aa).

Residues 28–48 (IVAVFAIFLTSVFGVWGPVLL) form a helical membrane-spanning segment. Residues 49 to 61 (AKYFHGKPLYDKA) lie on the Cytoplasmic side of the membrane. Residues 62–82 (ILVIKCFAAGVILSTSLVHVL) traverse the membrane as a helical segment. Residues 83–102 (PEAFESLADCQVSSRHPWKD) are Lumenal-facing. Residues 103-123 (FPFAGLVTMIGAITALLVDLT) form a helical membrane-spanning segment. The Cytoplasmic segment spans residues 124-179 (ASEHMGHGGGGGGDGGMEYMPVGKAVGGLEMKEGKCGADLEIQENSEEEIVKMKQR). Residues 180–200 (LVSQVLEIGIIFHSVIIGVTM) traverse the membrane as a helical segment. Residues 201–211 (GMSQNKCTIRP) lie on the Lumenal side of the membrane. A helical transmembrane segment spans residues 212 to 232 (LIAALSFHQIFEGLGLGGCIA). Topologically, residues 233-243 (QAGFKAGTVVY) are cytoplasmic. A helical transmembrane segment spans residues 244–264 (MCLMFAVTTPLGIVLGMVIFA). The Lumenal portion of the chain corresponds to 265-280 (ATGYDDQNPNALIMEG). The helical transmembrane segment at 281–301 (LLGSFSSGILIYMALVDLIAL) threads the bilayer. The Cytoplasmic segment spans residues 302–320 (DFFHNKMLTTCGESGSRLK). A helical membrane pass occupies residues 321-341 (KLCFVALVLGSASMSLLALWA).

This sequence belongs to the ZIP transporter (TC 2.A.5) family.

Its subcellular location is the plastid. It localises to the chloroplast thylakoid membrane. Functionally, may play a role in the transport of zinc in the plastids. This Arabidopsis thaliana (Mouse-ear cress) protein is Zinc transporter 6, chloroplastic (ZIP6).